We begin with the raw amino-acid sequence, 362 residues long: Peptide chain release factor 1 (362 aa).

Gln-237 carries the post-translational modification N5-methylglutamine.

It belongs to the prokaryotic/mitochondrial release factor family. Post-translationally, methylated by PrmC. Methylation increases the termination efficiency of RF1.

It localises to the cytoplasm. Peptide chain release factor 1 directs the termination of translation in response to the peptide chain termination codons UAG and UAA. This chain is Peptide chain release factor 1, found in Legionella pneumophila (strain Paris).